We begin with the raw amino-acid sequence, 776 residues long: Protein translocase subunit SecA 2 (776 aa).

Residues glutamine 80, 98–102 (GEGKT), and aspartate 486 each bind ATP.

Belongs to the SecA family. Monomer and homodimer. Part of the essential Sec protein translocation apparatus which comprises SecA, SecYEG and auxiliary proteins SecDF. Other proteins may also be involved.

The protein resides in the cell membrane. Its subcellular location is the cytoplasm. The catalysed reaction is ATP + H2O + cellular proteinSide 1 = ADP + phosphate + cellular proteinSide 2.. Part of the Sec protein translocase complex. Interacts with the SecYEG preprotein conducting channel. Has a central role in coupling the hydrolysis of ATP to the transfer of proteins into and across the cell membrane, serving as an ATP-driven molecular motor driving the stepwise translocation of polypeptide chains across the membrane. This Listeria welshimeri serovar 6b (strain ATCC 35897 / DSM 20650 / CCUG 15529 / CIP 8149 / NCTC 11857 / SLCC 5334 / V8) protein is Protein translocase subunit SecA 2.